Here is a 239-residue protein sequence, read N- to C-terminus: Ribonuclease PH (239 aa).

Residues Arg-86 and 124 to 126 contribute to the phosphate site; that span reads GTR.

This sequence belongs to the RNase PH family. As to quaternary structure, homohexameric ring arranged as a trimer of dimers.

It catalyses the reaction tRNA(n+1) + phosphate = tRNA(n) + a ribonucleoside 5'-diphosphate. Functionally, phosphorolytic 3'-5' exoribonuclease that plays an important role in tRNA 3'-end maturation. Removes nucleotide residues following the 3'-CCA terminus of tRNAs; can also add nucleotides to the ends of RNA molecules by using nucleoside diphosphates as substrates, but this may not be physiologically important. Probably plays a role in initiation of 16S rRNA degradation (leading to ribosome degradation) during starvation. The chain is Ribonuclease PH from Sinorhizobium fredii (strain NBRC 101917 / NGR234).